Reading from the N-terminus, the 364-residue chain is Chaperone protein DnaJ (364 aa).

Positions Asp-4 to Gly-69 constitute a J domain. The CR-type zinc-finger motif lies at Gly-135–Gln-213. Positions 148, 151, 165, 168, 187, 190, 201, and 204 each coordinate Zn(2+). CXXCXGXG motif repeat units follow at residues Cys-148–Lys-155, Cys-165–Gly-172, Cys-187–Gly-194, and Cys-201–Gly-208.

This sequence belongs to the DnaJ family. As to quaternary structure, homodimer. The cofactor is Zn(2+).

Its subcellular location is the cytoplasm. Participates actively in the response to hyperosmotic and heat shock by preventing the aggregation of stress-denatured proteins and by disaggregating proteins, also in an autonomous, DnaK-independent fashion. Unfolded proteins bind initially to DnaJ; upon interaction with the DnaJ-bound protein, DnaK hydrolyzes its bound ATP, resulting in the formation of a stable complex. GrpE releases ADP from DnaK; ATP binding to DnaK triggers the release of the substrate protein, thus completing the reaction cycle. Several rounds of ATP-dependent interactions between DnaJ, DnaK and GrpE are required for fully efficient folding. Also involved, together with DnaK and GrpE, in the DNA replication of plasmids through activation of initiation proteins. The polypeptide is Chaperone protein DnaJ (Borreliella burgdorferi (strain ATCC 35210 / DSM 4680 / CIP 102532 / B31) (Borrelia burgdorferi)).